Here is a 151-residue protein sequence, read N- to C-terminus: Transcriptional repressor NrdR (151 aa).

Residues 3–34 (CPKCGSLNDKVLETRQSKEGVVIKRRRECLNC) fold into a zinc finger. Residues 49–139 (IEVIKKNNTV…VFDGFEDIKD (91 aa)) form the ATP-cone domain.

The protein belongs to the NrdR family. It depends on Zn(2+) as a cofactor.

Its function is as follows. Negatively regulates transcription of bacterial ribonucleotide reductase nrd genes and operons by binding to NrdR-boxes. The sequence is that of Transcriptional repressor NrdR from Sulfurihydrogenibium sp. (strain YO3AOP1).